The chain runs to 403 residues: Ribosomal RNA large subunit methyltransferase I (403 aa).

The 80-residue stretch at 9 to 88 (YPRLVLSKGR…ESIDIAFFTR (80 aa)) folds into the PUA domain.

Belongs to the methyltransferase superfamily. RlmI family.

The protein localises to the cytoplasm. It catalyses the reaction cytidine(1962) in 23S rRNA + S-adenosyl-L-methionine = 5-methylcytidine(1962) in 23S rRNA + S-adenosyl-L-homocysteine + H(+). Functionally, specifically methylates the cytosine at position 1962 (m5C1962) of 23S rRNA. The chain is Ribosomal RNA large subunit methyltransferase I from Salmonella schwarzengrund (strain CVM19633).